The sequence spans 334 residues: NmrA-like family domain-containing oxidoreductase lnaB (334 aa).

NADP(+)-binding positions include 12–17 (GGTGKQ), 38–42 (RNAQS), 59–60 (DG), 80–82 (INS), Lys-138, and 162–165 (FLEN).

It belongs to the NmrA-type oxidoreductase family.

It functions in the pathway secondary metabolite biosynthesis. Its function is as follows. NmrA-like family domain-containing oxidoreductase; part of the lna gene cluster that mediates the biosynthesis of diastereomeric piperazines. Lna and lnb clusters encode sets of enzymes that produce overlapping sets of previously undescribed metabolites such as piperazinomycin-like metabolites or morpholine. The lna and lnb biosynthetic pathways appear to be part of a signaling network that controls the formation of sclerotia, a resilient overwintering structure. One primary function of the non-canonical nonribosomal peptide synthetases lnaA and lnbA consists in the reduction of L-tyrosine. The presence in the clusters of tailoring enzymes such as the oxidoreductases lnaB, lnbB, lnaE or lnbE, as well as of the cytochrome P450 monooxygenases lnaC, lnaD, or lnbC, might explain formation of various diastereomeric piperazines. The sequence is that of NmrA-like family domain-containing oxidoreductase lnaB from Aspergillus flavus (strain ATCC 200026 / FGSC A1120 / IAM 13836 / NRRL 3357 / JCM 12722 / SRRC 167).